The following is a 222-amino-acid chain: Endonuclease V (222 aa).

Mg(2+) is bound by residues D43 and D109.

This sequence belongs to the endonuclease V family. The cofactor is Mg(2+).

It localises to the cytoplasm. The enzyme catalyses Endonucleolytic cleavage at apurinic or apyrimidinic sites to products with a 5'-phosphate.. DNA repair enzyme involved in the repair of deaminated bases. Selectively cleaves double-stranded DNA at the second phosphodiester bond 3' to a deoxyinosine leaving behind the intact lesion on the nicked DNA. This Roseiflexus castenholzii (strain DSM 13941 / HLO8) protein is Endonuclease V.